The following is a 417-amino-acid chain: Serine hydroxymethyltransferase (417 aa).

(6S)-5,6,7,8-tetrahydrofolate contacts are provided by residues Leu112 and 116–118 (GHL). An N6-(pyridoxal phosphate)lysine modification is found at Lys221. (6S)-5,6,7,8-tetrahydrofolate is bound at residue Glu247.

The protein belongs to the SHMT family. In terms of assembly, homodimer. Pyridoxal 5'-phosphate is required as a cofactor.

The protein localises to the cytoplasm. The enzyme catalyses (6R)-5,10-methylene-5,6,7,8-tetrahydrofolate + glycine + H2O = (6S)-5,6,7,8-tetrahydrofolate + L-serine. It participates in one-carbon metabolism; tetrahydrofolate interconversion. The protein operates within amino-acid biosynthesis; glycine biosynthesis; glycine from L-serine: step 1/1. In terms of biological role, catalyzes the reversible interconversion of serine and glycine with tetrahydrofolate (THF) serving as the one-carbon carrier. This reaction serves as the major source of one-carbon groups required for the biosynthesis of purines, thymidylate, methionine, and other important biomolecules. Also exhibits THF-independent aldolase activity toward beta-hydroxyamino acids, producing glycine and aldehydes, via a retro-aldol mechanism. This Borrelia garinii subsp. bavariensis (strain ATCC BAA-2496 / DSM 23469 / PBi) (Borreliella bavariensis) protein is Serine hydroxymethyltransferase.